An 80-amino-acid chain; its full sequence is Cytochrome c oxidase subunit 7B, mitochondrial (80 aa).

The transit peptide at 1-24 (MFPLVKSALNRLQVRSIQQTMARQ) directs the protein to the mitochondrion. The Mitochondrial matrix portion of the chain corresponds to 25–32 (SHQKRTPD). A helical transmembrane segment spans residues 33–59 (FHDKYGNAVLASGATFCIVTWTYVATQ). Over 60–80 (VGIEWNLSPVGRVTPKEWRNQ) the chain is Mitochondrial intermembrane.

It belongs to the cytochrome c oxidase VIIb family. As to quaternary structure, component of the cytochrome c oxidase (complex IV, CIV), a multisubunit enzyme composed of 14 subunits. The complex is composed of a catalytic core of 3 subunits MT-CO1, MT-CO2 and MT-CO3, encoded in the mitochondrial DNA, and 11 supernumerary subunits COX4I1 (or COX4I2), COX5A, COX5B, COX6A1 (or COX6A2), COX6B1 (or COX6B2), COX6C, COX7A2 (or COX7A1), COX7B, COX7C, COX8A and NDUFA4, which are encoded in the nuclear genome. The complex exists as a monomer or a dimer and forms supercomplexes (SCs) in the inner mitochondrial membrane with NADH-ubiquinone oxidoreductase (complex I, CI) and ubiquinol-cytochrome c oxidoreductase (cytochrome b-c1 complex, complex III, CIII), resulting in different assemblies (supercomplex SCI(1)III(2)IV(1) and megacomplex MCI(2)III(2)IV(2)).

Its subcellular location is the mitochondrion inner membrane. The protein operates within energy metabolism; oxidative phosphorylation. Functionally, component of the cytochrome c oxidase, the last enzyme in the mitochondrial electron transport chain which drives oxidative phosphorylation. The respiratory chain contains 3 multisubunit complexes succinate dehydrogenase (complex II, CII), ubiquinol-cytochrome c oxidoreductase (cytochrome b-c1 complex, complex III, CIII) and cytochrome c oxidase (complex IV, CIV), that cooperate to transfer electrons derived from NADH and succinate to molecular oxygen, creating an electrochemical gradient over the inner membrane that drives transmembrane transport and the ATP synthase. Cytochrome c oxidase is the component of the respiratory chain that catalyzes the reduction of oxygen to water. Electrons originating from reduced cytochrome c in the intermembrane space (IMS) are transferred via the dinuclear copper A center (CU(A)) of subunit 2 and heme A of subunit 1 to the active site in subunit 1, a binuclear center (BNC) formed by heme A3 and copper B (CU(B)). The BNC reduces molecular oxygen to 2 water molecules using 4 electrons from cytochrome c in the IMS and 4 protons from the mitochondrial matrix. Plays a role in proper central nervous system (CNS) development in vertebrates. The chain is Cytochrome c oxidase subunit 7B, mitochondrial (COX7B) from Homo sapiens (Human).